A 215-amino-acid polypeptide reads, in one-letter code: Protein Syd (215 aa).

The protein belongs to the Syd family.

The protein localises to the cell inner membrane. Interacts with the SecY protein in vivo. May bind preferentially to an uncomplexed state of SecY, thus functioning either as a chelating agent for excess SecY in the cell or as a regulatory factor that negatively controls the translocase function. The chain is Protein Syd from Shewanella piezotolerans (strain WP3 / JCM 13877).